The chain runs to 322 residues: Ribosomal RNA small subunit methyltransferase H (322 aa).

S-adenosyl-L-methionine-binding positions include 42 to 44 (GGH), aspartate 62, phenylalanine 86, aspartate 107, and glutamine 114.

The protein belongs to the methyltransferase superfamily. RsmH family.

The protein resides in the cytoplasm. It catalyses the reaction cytidine(1402) in 16S rRNA + S-adenosyl-L-methionine = N(4)-methylcytidine(1402) in 16S rRNA + S-adenosyl-L-homocysteine + H(+). Specifically methylates the N4 position of cytidine in position 1402 (C1402) of 16S rRNA. The chain is Ribosomal RNA small subunit methyltransferase H from Janthinobacterium sp. (strain Marseille) (Minibacterium massiliensis).